The primary structure comprises 37 residues: Large ribosomal subunit protein bL36 (37 aa).

It belongs to the bacterial ribosomal protein bL36 family.

The chain is Large ribosomal subunit protein bL36 from Prochlorococcus marinus (strain MIT 9303).